The following is an 83-amino-acid chain: Small ribosomal subunit protein bS16 (83 aa).

Belongs to the bacterial ribosomal protein bS16 family.

The chain is Small ribosomal subunit protein bS16 from Cupriavidus taiwanensis (strain DSM 17343 / BCRC 17206 / CCUG 44338 / CIP 107171 / LMG 19424 / R1) (Ralstonia taiwanensis (strain LMG 19424)).